The sequence spans 879 residues: Alanine--tRNA ligase (879 aa).

The Zn(2+) site is built by H566, H570, C668, and H672.

The protein belongs to the class-II aminoacyl-tRNA synthetase family. Zn(2+) serves as cofactor.

The protein localises to the cytoplasm. The catalysed reaction is tRNA(Ala) + L-alanine + ATP = L-alanyl-tRNA(Ala) + AMP + diphosphate. Its function is as follows. Catalyzes the attachment of alanine to tRNA(Ala) in a two-step reaction: alanine is first activated by ATP to form Ala-AMP and then transferred to the acceptor end of tRNA(Ala). Also edits incorrectly charged Ser-tRNA(Ala) and Gly-tRNA(Ala) via its editing domain. This is Alanine--tRNA ligase from Listeria innocua serovar 6a (strain ATCC BAA-680 / CLIP 11262).